A 376-amino-acid polypeptide reads, in one-letter code: Mannosyl phosphorylinositol ceramide synthase CSH1 (376 aa).

The next 2 membrane-spanning stretches (helical) occupy residues 7–27 (ILIIANIALLISIIHYTFDLL) and 274–294 (ILSCVVTGFIFGFFILYGEFT). Residues 331–351 (NKEKRRNPTRHEYNSRGKRLR) are disordered. A Phosphoserine modification is found at Ser354.

The protein belongs to the glycosyltransferase 32 family. In terms of assembly, heterodimer of CSH1 and CSG2.

Its subcellular location is the vacuole membrane. It carries out the reaction a 1D-myo-inositol-1-phospho-N-[(R)-2-hydroxy-very-long-chain fatty acyl]-(R)-4-hydroxysphingoid base + GDP-alpha-D-mannose = an alpha-D-mannosyl-(1&lt;-&gt;6)-1D-myo-inositol-1-phospho-N-[(R)-2-hydroxy-very-long-chain fatty acyl]-(R)-4-hydroxysphingoid base + GDP + H(+). Functionally, involved in the synthesis of mannosyl phosphorylinositol ceramide. Catalyzes the addition of mannosyl to phosphorylinositol ceramide. The chain is Mannosyl phosphorylinositol ceramide synthase CSH1 from Saccharomyces cerevisiae (strain ATCC 204508 / S288c) (Baker's yeast).